Reading from the N-terminus, the 174-residue chain is MKKSVKQEQVTQMHDKLLRAKAVFLADFRGMNVDKATTLRNELRSASVEYKVFKNTLFDIAAKETEAACLAPYLAGPTAVAISYDDPVGAAKVLSKFAKDSKGVFVLKAGVLSGKVIDVNQIQALADLPSREVLIAKMLGSMQAPATNFVGVLAALPGSLVRALDAIRAKKEGN.

Belongs to the universal ribosomal protein uL10 family. As to quaternary structure, part of the ribosomal stalk of the 50S ribosomal subunit. The N-terminus interacts with L11 and the large rRNA to form the base of the stalk. The C-terminus forms an elongated spine to which L12 dimers bind in a sequential fashion forming a multimeric L10(L12)X complex.

In terms of biological role, forms part of the ribosomal stalk, playing a central role in the interaction of the ribosome with GTP-bound translation factors. In Trichlorobacter lovleyi (strain ATCC BAA-1151 / DSM 17278 / SZ) (Geobacter lovleyi), this protein is Large ribosomal subunit protein uL10.